Reading from the N-terminus, the 168-residue chain is Ribosome maturation factor RimM (168 aa).

Residues 95-168 (EEGYYWSDLI…RITVDWGLDY (74 aa)) form the PRC barrel domain.

This sequence belongs to the RimM family. In terms of assembly, binds ribosomal protein uS19.

Its subcellular location is the cytoplasm. Functionally, an accessory protein needed during the final step in the assembly of 30S ribosomal subunit, possibly for assembly of the head region. Essential for efficient processing of 16S rRNA. May be needed both before and after RbfA during the maturation of 16S rRNA. It has affinity for free ribosomal 30S subunits but not for 70S ribosomes. This Nitrosospira multiformis (strain ATCC 25196 / NCIMB 11849 / C 71) protein is Ribosome maturation factor RimM.